A 236-amino-acid chain; its full sequence is Class B acid phosphatase (236 aa).

The first 22 residues, 1–22 (MKNVMKLSVIALLTAAAVPAMA), serve as a signal peptide directing secretion. Residue Asp-67 is the Nucleophile of the active site. Residues Asp-67 and Asp-69 each contribute to the Mg(2+) site. The active-site Proton donor is the Asp-69. Residues 136–137 (TG) and Lys-176 each bind substrate. Residue Asp-191 coordinates Mg(2+).

Belongs to the class B bacterial acid phosphatase family. Homotetramer. The cofactor is Mg(2+).

It is found in the periplasm. It catalyses the reaction a phosphate monoester + H2O = an alcohol + phosphate. Dephosphorylates several organic phosphate monoesters. Also has a phosphotransferase activity catalyzing the transfer of low-energy phosphate groups from organic phosphate monoesters to free hydroxyl groups of various organic compounds. The polypeptide is Class B acid phosphatase (aphA) (Haemophilus influenzae (strain ATCC 51907 / DSM 11121 / KW20 / Rd)).